Reading from the N-terminus, the 399-residue chain is Probable sugar efflux transporter (399 aa).

12 helical membrane passes run 15 to 35 (VVTLAIAAFIFNTTEFAPVGL), 50 to 70 (VGMMLTIYAWVVALMSLPFML), 81 to 101 (LIGLFILFIASHVLSFFAWNF), 103 to 123 (VLVISRIGIAFAHAVFWSITS), 136 to 156 (AQALSLIATGTALAMVFGIPI), 168 to 188 (MTFLAIGLGALATLACLVKLL), 209 to 229 (PALVSVYILTVVVVTAHYTAY), 246 to 266 (FATVLLLILGGAGIIGSILFG), 273 to 293 (ASGLISLAIALLLACLLLLLP), 301 to 321 (LMLLSIFWGVAIMIIGLGMQV), 333 to 353 (VAMSLFSGIFNIGIGAGALVG), and 364 to 384 (SVGYVGAIPALVALVWSLMIF).

The protein belongs to the major facilitator superfamily. SotB (TC 2.A.1.2) family.

The protein localises to the cell inner membrane. Functionally, involved in the efflux of sugars. The physiological role may be the reduction of the intracellular concentration of toxic sugars or sugar metabolites. The sequence is that of Probable sugar efflux transporter from Klebsiella pneumoniae subsp. pneumoniae (strain ATCC 700721 / MGH 78578).